The following is a 210-amino-acid chain: Chaperone protein TorD (210 aa).

This sequence belongs to the TorD/DmsD family. TorD subfamily.

It localises to the cytoplasm. Its function is as follows. Involved in the biogenesis of TorA. Acts on TorA before the insertion of the molybdenum cofactor and, as a result, probably favors a conformation of the apoenzyme that is competent for acquiring the cofactor. The chain is Chaperone protein TorD from Salmonella newport (strain SL254).